The following is a 174-amino-acid chain: Gamma-crystallin C (174 aa).

Beta/gamma crystallin 'Greek key' domains are found at residues 2-40 (GKITLYEDKAFQGRSYESTTDCPNLQTYLSRCNSIRVES) and 41-83 (GCWM…CLIP). An S-methylcysteine modification is found at Cys-23. The tract at residues 84–87 (QTGS) is connecting peptide. Beta/gamma crystallin 'Greek key' domains follow at residues 88–128 (HRLR…HVLE) and 129–171 (GCWV…RRVV).

The protein belongs to the beta/gamma-crystallin family. Monomer.

Functionally, crystallins are the dominant structural components of the vertebrate eye lens. This Macaca mulatta (Rhesus macaque) protein is Gamma-crystallin C (CRYGC).